A 191-amino-acid chain; its full sequence is Corrinoid adenosyltransferase (191 aa).

ATP-binding positions include 10–18 (TRTGDNGTT), Lys28, 140–145 (RRAERS), and Asn166.

Belongs to the Cob(I)alamin adenosyltransferase family.

It localises to the cytoplasm. It carries out the reaction 2 cob(II)yrinate a,c diamide + reduced [electron-transfer flavoprotein] + 2 ATP = 2 adenosylcob(III)yrinate a,c-diamide + 2 triphosphate + oxidized [electron-transfer flavoprotein] + 3 H(+). The enzyme catalyses 2 cob(II)alamin + reduced [electron-transfer flavoprotein] + 2 ATP = 2 adenosylcob(III)alamin + 2 triphosphate + oxidized [electron-transfer flavoprotein] + 3 H(+). The protein operates within cofactor biosynthesis; adenosylcobalamin biosynthesis; adenosylcobalamin from cob(II)yrinate a,c-diamide: step 2/7. The polypeptide is Corrinoid adenosyltransferase (Mycobacterium leprae (strain TN)).